Reading from the N-terminus, the 184-residue chain is Probable RNA 2'-phosphotransferase (184 aa).

The protein belongs to the KptA/TPT1 family.

Its function is as follows. Removes the 2'-phosphate from RNA via an intermediate in which the phosphate is ADP-ribosylated by NAD followed by a presumed transesterification to release the RNA and generate ADP-ribose 1''-2''-cyclic phosphate (APPR&gt;P). May function as an ADP-ribosylase. The protein is Probable RNA 2'-phosphotransferase of Escherichia coli O6:K15:H31 (strain 536 / UPEC).